The sequence spans 262 residues: Phosphatidylglycerol--prolipoprotein diacylglyceryl transferase (262 aa).

The next 4 helical transmembrane spans lie at 9-29 (LGPLAIRWYALCIVTGLILAV), 41-61 (IIPDDILDFILVAFPLAILGA), 80-100 (IFAIWNGGLAIYGGLITGALV), and 109-129 (LINTWDFLDIAAPSVMIAQSL). Arginine 131 lines the a 1,2-diacyl-sn-glycero-3-phospho-(1'-sn-glycerol) pocket. A run of 3 helical transmembrane segments spans residues 167–187 (QPTFLYESLWNLLGFALILIF), 197–217 (GHITAFYLIWYGFGRMVIEGM), and 226–246 (GFRVSQWLSVVLIGLGIMIVI).

The protein belongs to the Lgt family.

The protein resides in the cell membrane. It catalyses the reaction L-cysteinyl-[prolipoprotein] + a 1,2-diacyl-sn-glycero-3-phospho-(1'-sn-glycerol) = an S-1,2-diacyl-sn-glyceryl-L-cysteinyl-[prolipoprotein] + sn-glycerol 1-phosphate + H(+). The protein operates within protein modification; lipoprotein biosynthesis (diacylglyceryl transfer). Its function is as follows. Catalyzes the transfer of the diacylglyceryl group from phosphatidylglycerol to the sulfhydryl group of the N-terminal cysteine of a prolipoprotein, the first step in the formation of mature lipoproteins. This chain is Phosphatidylglycerol--prolipoprotein diacylglyceryl transferase, found in Streptococcus pneumoniae serotype 4 (strain ATCC BAA-334 / TIGR4).